We begin with the raw amino-acid sequence, 116 residues long: Large ribosomal subunit protein bL20 (116 aa).

Belongs to the bacterial ribosomal protein bL20 family.

Binds directly to 23S ribosomal RNA and is necessary for the in vitro assembly process of the 50S ribosomal subunit. It is not involved in the protein synthesizing functions of that subunit. The polypeptide is Large ribosomal subunit protein bL20 (Helicobacter pylori (strain Shi470)).